The following is a 250-amino-acid chain: MSKLRVAVLGVKGRIGSEAVRAVEAAEDMELVAALGRGDKLETLADTGAQVAVELTTPASVMGNLDFCVRHGIHAVVGTTGWTDDRLAQLKGWLAQSPETGVLIAPNFSIGAVLTMKFAQLAAPYFESVEVVELHHPNKVDAPSGTATRTAQLIAEARRKAGSAPQPDATVTALDGARGANVDGVPVHAVRLRGLLAHQEVLLGAEGETLTVRHDSLHHSSFMPGILLGARRVVTTPGLTFGLEHFLDLN.

Residues 10-15, 78-80, and 105-108 each bind NAD(+); these read GVKGRI, GTT, and APNF. The Proton donor/acceptor role is filled by His-135. His-136 serves as a coordination point for (S)-2,3,4,5-tetrahydrodipicolinate. The active-site Proton donor is Lys-139. Position 145–146 (145–146) interacts with (S)-2,3,4,5-tetrahydrodipicolinate; the sequence is GT.

Belongs to the DapB family.

The protein resides in the cytoplasm. It carries out the reaction (S)-2,3,4,5-tetrahydrodipicolinate + NAD(+) + H2O = (2S,4S)-4-hydroxy-2,3,4,5-tetrahydrodipicolinate + NADH + H(+). It catalyses the reaction (S)-2,3,4,5-tetrahydrodipicolinate + NADP(+) + H2O = (2S,4S)-4-hydroxy-2,3,4,5-tetrahydrodipicolinate + NADPH + H(+). It participates in amino-acid biosynthesis; L-lysine biosynthesis via DAP pathway; (S)-tetrahydrodipicolinate from L-aspartate: step 4/4. In terms of biological role, catalyzes the conversion of 4-hydroxy-tetrahydrodipicolinate (HTPA) to tetrahydrodipicolinate. This Streptomyces avermitilis (strain ATCC 31267 / DSM 46492 / JCM 5070 / NBRC 14893 / NCIMB 12804 / NRRL 8165 / MA-4680) protein is 4-hydroxy-tetrahydrodipicolinate reductase.